Here is a 280-residue protein sequence, read N- to C-terminus: Putative aquaporin-10 (280 aa).

Residues 1 to 8 lie on the Cytoplasmic side of the membrane; that stretch reads MEAVSSEY. Residues 9–29 form a helical membrane-spanning segment; the sequence is YFPLYSALGYFALVFGIGEIA. Topologically, residues 30–64 are extracellular; sequence RIITAKYVSPRGNSQLFLYELIGTIQMCTCVYENG. Residues 65–85 form a helical membrane-spanning segment; it reads IIFKNYGFPAIFICVALLLTA. The Cytoplasmic segment spans residues 86–114; it reads GNIFNRGAMTNCAPIFEQFVFGNLGSSKF. A helical membrane pass occupies residues 115-135; that stretch reads LTILSAQLIGATFASKFAYLI. The Extracellular portion of the chain corresponds to 136-164; the sequence is WNITAPYSTAHLENASNLECILHYKQTAG. A helical membrane pass occupies residues 165-185; it reads IVIGFEIVGAFVVRIVVAQLL. The Cytoplasmic segment spans residues 186-193; that stretch reads ARPALIKL. The helical transmembrane segment at 194–214 threads the bilayer; that stretch reads IPFAISAYLSLALYVVGVPGL. At 215 to 233 the chain is on the extracellular side; sequence NPIVATARLYGCRGIDNSS. The chain crosses the membrane as a helical span at residues 234-254; the sequence is FFILYWFCPVLGWLTGAYVVG. At 255–280 the chain is on the cytoplasmic side; it reads QKSPSKKSAKDVKAEKKAKAAAKKSD. A disordered region spans residues 256-280; sequence KSPSKKSAKDVKAEKKAKAAAKKSD. The segment covering 262–280 has biased composition (basic and acidic residues); that stretch reads SAKDVKAEKKAKAAAKKSD.

It belongs to the MIP/aquaporin (TC 1.A.8) family.

Its subcellular location is the membrane. In Caenorhabditis elegans, this protein is Putative aquaporin-10 (aqp-10).